Consider the following 471-residue polypeptide: tRNA-2-methylthio-N(6)-dimethylallyladenosine synthase (471 aa).

In terms of domain architecture, MTTase N-terminal spans 31–149; sequence LYYHIETYGC…FPQLLWEALN (119 aa). [4Fe-4S] cluster contacts are provided by C40, C76, C110, C186, C190, and C193. The region spanning 172 to 402 is the Radical SAM core domain; the sequence is RDSNLKAWVN…IELQNKISLE (231 aa). One can recognise a TRAM domain in the interval 405–468; sequence AELRGKIVEV…AWTMQGELVE (64 aa).

This sequence belongs to the methylthiotransferase family. MiaB subfamily. In terms of assembly, monomer. [4Fe-4S] cluster serves as cofactor.

Its subcellular location is the cytoplasm. It catalyses the reaction N(6)-dimethylallyladenosine(37) in tRNA + (sulfur carrier)-SH + AH2 + 2 S-adenosyl-L-methionine = 2-methylsulfanyl-N(6)-dimethylallyladenosine(37) in tRNA + (sulfur carrier)-H + 5'-deoxyadenosine + L-methionine + A + S-adenosyl-L-homocysteine + 2 H(+). In terms of biological role, catalyzes the methylthiolation of N6-(dimethylallyl)adenosine (i(6)A), leading to the formation of 2-methylthio-N6-(dimethylallyl)adenosine (ms(2)i(6)A) at position 37 in tRNAs that read codons beginning with uridine. This Thermoanaerobacter sp. (strain X514) protein is tRNA-2-methylthio-N(6)-dimethylallyladenosine synthase.